A 107-amino-acid polypeptide reads, in one-letter code: MDLNNRLTEDETLEQAYDIFLELAGDNLDPADILLFNLQFEERGGAELYDPAEDWSEHVDFDLNPDFFAEVVIGLADSDGEPINDVFARVLLCREKDHKLCHILWKE.

The protein belongs to the putative dsDNA mimic protein family.

Functionally, may act as a double-stranded DNA (dsDNA) mimic. Probably regulates the activity of a dsDNA-binding protein. The sequence is that of Putative double-stranded DNA mimic protein Spro_2690 from Serratia proteamaculans (strain 568).